The primary structure comprises 74 residues: Large ribosomal subunit protein uL30 (74 aa).

It belongs to the universal ribosomal protein uL30 family. In terms of assembly, part of the 50S ribosomal subunit.

The chain is Large ribosomal subunit protein uL30 from Micrococcus luteus (strain ATCC 4698 / DSM 20030 / JCM 1464 / CCM 169 / CCUG 5858 / IAM 1056 / NBRC 3333 / NCIMB 9278 / NCTC 2665 / VKM Ac-2230) (Micrococcus lysodeikticus).